Consider the following 371-residue polypeptide: Carbamoyl phosphate synthase small chain (371 aa).

Residues 1–190 are CPSase; that stretch reads MRKTAILALE…LYRENEKPLV (190 aa). L-glutamine is bound by residues Ser47, Gly237, and Gly239. A Glutamine amidotransferase type-1 domain is found at 189–371; that stretch reads LVAVIDFGVK…FKEFVKMAQG (183 aa). The Nucleophile role is filled by Cys264. 4 residues coordinate L-glutamine: Leu265, Gln268, Asn306, and Phe309. Active-site residues include His348 and Glu350.

This sequence belongs to the CarA family. As to quaternary structure, composed of two chains; the small (or glutamine) chain promotes the hydrolysis of glutamine to ammonia, which is used by the large (or ammonia) chain to synthesize carbamoyl phosphate. Tetramer of heterodimers (alpha,beta)4.

The enzyme catalyses hydrogencarbonate + L-glutamine + 2 ATP + H2O = carbamoyl phosphate + L-glutamate + 2 ADP + phosphate + 2 H(+). It carries out the reaction L-glutamine + H2O = L-glutamate + NH4(+). The protein operates within amino-acid biosynthesis; L-arginine biosynthesis; carbamoyl phosphate from bicarbonate: step 1/1. It participates in pyrimidine metabolism; UMP biosynthesis via de novo pathway; (S)-dihydroorotate from bicarbonate: step 1/3. In terms of biological role, small subunit of the glutamine-dependent carbamoyl phosphate synthetase (CPSase). CPSase catalyzes the formation of carbamoyl phosphate from the ammonia moiety of glutamine, carbonate, and phosphate donated by ATP, constituting the first step of 2 biosynthetic pathways, one leading to arginine and/or urea and the other to pyrimidine nucleotides. The small subunit (glutamine amidotransferase) binds and cleaves glutamine to supply the large subunit with the substrate ammonia. This chain is Carbamoyl phosphate synthase small chain, found in Aquifex aeolicus (strain VF5).